Consider the following 220-residue polypeptide: MPIKSSDHSLYALFGGTFDPIHYGHLKPVEALAQQVGLQHIILLPNHVPPHRPQPEANAQQRLKMVELAVAGNPLFSVDSRELLRDSPSFTIETLEALRKERGAEQPLAFIIGQDSLLSLHKWHRWQALLDVCHLLVCARPGYSQSLETPELQQWLESHKVMDPQALSQRPHGAIYLADTPLLDISATDIRRRRHNGESCDDLLPQAVQRYIELQGLYRG.

Belongs to the NadD family.

It carries out the reaction nicotinate beta-D-ribonucleotide + ATP + H(+) = deamido-NAD(+) + diphosphate. Its pathway is cofactor biosynthesis; NAD(+) biosynthesis; deamido-NAD(+) from nicotinate D-ribonucleotide: step 1/1. In terms of biological role, catalyzes the reversible adenylation of nicotinate mononucleotide (NaMN) to nicotinic acid adenine dinucleotide (NaAD). This chain is Probable nicotinate-nucleotide adenylyltransferase, found in Yersinia pseudotuberculosis serotype O:1b (strain IP 31758).